The following is a 442-amino-acid chain: MKINVRGSTMVRPAEETPRVRLWNSSLDLVVPRFHTPSVYFFRRGEAAAAEGGSYFDGERMRRALAEALVPFYPMAGRLAHDEDGRVEIDCNGEGVLFVEADAPGATVDDFGDFAPTMDLKRLIPTVDYTDGISSFPILVLQVTHFKCGGVALGVGMQHHVADGFSGLHFINSWADLCRGVPIAVMPFIDRTLVRARDPPAPSHPHVEYQPAPAMLAPEPPQALTAKPAPPPTAVDIFKLSRSDLGRLRSQLPRGEGAPRYSTYAVLAAHVWRCASLARGLPAEQPTKLYCATDGRQRLQPSLPDGYFGNVIFTATPLAEAGRVTGSLADGAATIQSALDRMDSGYCRSALDYLELQPDLSALVRGAHTFRCPNLGLTSWVRLPIHDADFGWGRPVFMGPGGIAYEGLAFVLPSASGDGSLSVAISLQAEHMEKFRKMIFDF.

Active-site proton acceptor residues include His-159 and Asp-389.

This sequence belongs to the plant acyltransferase family. As to expression, expressed in roots and leaves. Expressed at low levels in stems and seeds.

Functionally, hydroxycinnamoyl transferase that catalyzes the transfer of an acyl from p-coumaryol-CoA to various acyl acceptors. Can use feruloyl-CoA and caffeoyl-CoA as acyl donors. This is Hydroxycinnamoyltransferase 2 from Oryza sativa subsp. japonica (Rice).